Here is a 431-residue protein sequence, read N- to C-terminus: Trigger factor (431 aa).

Positions 161 to 246 (DDRVTIDFVG…LKKVENIVLP (86 aa)) constitute a PPIase FKBP-type domain.

The protein belongs to the FKBP-type PPIase family. Tig subfamily.

Its subcellular location is the cytoplasm. It carries out the reaction [protein]-peptidylproline (omega=180) = [protein]-peptidylproline (omega=0). Functionally, involved in protein export. Acts as a chaperone by maintaining the newly synthesized protein in an open conformation. Functions as a peptidyl-prolyl cis-trans isomerase. This chain is Trigger factor, found in Glaesserella parasuis serovar 5 (strain SH0165) (Haemophilus parasuis).